The primary structure comprises 411 residues: Arginine deiminase (411 aa).

Cys-401 serves as the catalytic Amidino-cysteine intermediate.

The protein belongs to the arginine deiminase family.

The protein localises to the cytoplasm. The catalysed reaction is L-arginine + H2O = L-citrulline + NH4(+). It participates in amino-acid degradation; L-arginine degradation via ADI pathway; carbamoyl phosphate from L-arginine: step 1/2. This Staphylococcus epidermidis (strain ATCC 35984 / DSM 28319 / BCRC 17069 / CCUG 31568 / BM 3577 / RP62A) protein is Arginine deiminase.